Reading from the N-terminus, the 480-residue chain is Protein U54 (480 aa).

The sequence is that of Protein U54 from Elephas maximus (Indian elephant).